The sequence spans 325 residues: tRNA (guanine-N(7)-)-methyltransferase (325 aa).

Residues 1 to 101 form a disordered region; it reads MSEATDKQKQ…LEYPKSPESM (101 aa). Residues 51-69 are compositionally biased toward polar residues; sequence VSTTPEPEQSDSSATTATI. Residues glycine 122, 145–146, 199–200, and cysteine 219 contribute to the S-adenosyl-L-methionine site; these read EI and NA. Residue aspartate 222 is part of the active site. Residue 297–299 participates in S-adenosyl-L-methionine binding; sequence TEE.

The protein belongs to the class I-like SAM-binding methyltransferase superfamily. TrmB family. Forms a complex with TRM82.

The protein resides in the nucleus. The catalysed reaction is guanosine(46) in tRNA + S-adenosyl-L-methionine = N(7)-methylguanosine(46) in tRNA + S-adenosyl-L-homocysteine. The protein operates within tRNA modification; N(7)-methylguanine-tRNA biosynthesis. Functionally, catalyzes the formation of N(7)-methylguanine at position 46 (m7G46) in tRNA. This Candida albicans (strain SC5314 / ATCC MYA-2876) (Yeast) protein is tRNA (guanine-N(7)-)-methyltransferase.